The following is a 178-amino-acid chain: Nucleoside triphosphate/diphosphate phosphatase (178 aa).

Catalysis depends on R23, which acts as the Proton donor. Mg(2+) is bound by residues N87, D103, D105, D107, D120, and E123.

Belongs to the Ntdp family. The cofactor is Mg(2+).

It catalyses the reaction a ribonucleoside 5'-triphosphate + H2O = a ribonucleoside 5'-diphosphate + phosphate + H(+). It carries out the reaction a ribonucleoside 5'-diphosphate + H2O = a ribonucleoside 5'-phosphate + phosphate + H(+). Its function is as follows. Has nucleoside phosphatase activity towards nucleoside triphosphates and nucleoside diphosphates. The protein is Nucleoside triphosphate/diphosphate phosphatase of Latilactobacillus sakei subsp. sakei (strain 23K) (Lactobacillus sakei subsp. sakei).